Consider the following 85-residue polypeptide: Alpha-toxin BmalphaTx47 (85 aa).

The first 19 residues, 1 to 19, serve as a signal peptide directing secretion; sequence MNYLIVISFALLLMTGVQS. One can recognise an LCN-type CS-alpha/beta domain in the interval 21-83; that stretch reads RDAYIADSEN…VPIRISGSCR (63 aa). Cystine bridges form between cysteine 31–cysteine 82, cysteine 35–cysteine 55, cysteine 41–cysteine 65, and cysteine 45–cysteine 67.

This sequence belongs to the long (4 C-C) scorpion toxin superfamily. Sodium channel inhibitor family. Alpha subfamily. As to expression, expressed by the venom gland.

It is found in the secreted. Its function is as follows. Alpha toxins bind voltage-independently at site-3 of sodium channels (Nav) and inhibit the inactivation of the activated channels, thereby blocking neuronal transmission. This toxin expressed with the pET-14b vector has low inhibitory activity on sodium channels (11.33% on rNav1.2/SCN2A, 15.96% on mNav1.4/SCN4A and 5.04% on hNav1.5/SCN5A). When expressed with the pET-28a vector, this toxin has higher inhibitory activities (44.12% on rNav1.2/SCN2A, 25.40% on mNav1.4/SCN4A and 65.34% on hNav1.5/SCN5A). This is Alpha-toxin BmalphaTx47 from Olivierus martensii (Manchurian scorpion).